The chain runs to 357 residues: UDP-N-acetylglucosamine--N-acetylmuramyl-(pentapeptide) pyrophosphoryl-undecaprenol N-acetylglucosamine transferase (357 aa).

UDP-N-acetyl-alpha-D-glucosamine-binding positions include threonine 11–glycine 13, asparagine 120, arginine 161, serine 188, and glutamine 281.

Belongs to the glycosyltransferase 28 family. MurG subfamily.

The protein localises to the cell inner membrane. It catalyses the reaction di-trans,octa-cis-undecaprenyl diphospho-N-acetyl-alpha-D-muramoyl-L-alanyl-D-glutamyl-meso-2,6-diaminopimeloyl-D-alanyl-D-alanine + UDP-N-acetyl-alpha-D-glucosamine = di-trans,octa-cis-undecaprenyl diphospho-[N-acetyl-alpha-D-glucosaminyl-(1-&gt;4)]-N-acetyl-alpha-D-muramoyl-L-alanyl-D-glutamyl-meso-2,6-diaminopimeloyl-D-alanyl-D-alanine + UDP + H(+). It functions in the pathway cell wall biogenesis; peptidoglycan biosynthesis. Its function is as follows. Cell wall formation. Catalyzes the transfer of a GlcNAc subunit on undecaprenyl-pyrophosphoryl-MurNAc-pentapeptide (lipid intermediate I) to form undecaprenyl-pyrophosphoryl-MurNAc-(pentapeptide)GlcNAc (lipid intermediate II). The chain is UDP-N-acetylglucosamine--N-acetylmuramyl-(pentapeptide) pyrophosphoryl-undecaprenol N-acetylglucosamine transferase from Prochlorococcus marinus (strain SARG / CCMP1375 / SS120).